An 89-amino-acid chain; its full sequence is Small ribosomal subunit protein uS15 (89 aa).

Belongs to the universal ribosomal protein uS15 family. Part of the 30S ribosomal subunit. Forms a bridge to the 50S subunit in the 70S ribosome, contacting the 23S rRNA.

Its function is as follows. One of the primary rRNA binding proteins, it binds directly to 16S rRNA where it helps nucleate assembly of the platform of the 30S subunit by binding and bridging several RNA helices of the 16S rRNA. Forms an intersubunit bridge (bridge B4) with the 23S rRNA of the 50S subunit in the ribosome. The protein is Small ribosomal subunit protein uS15 of Shewanella denitrificans (strain OS217 / ATCC BAA-1090 / DSM 15013).